A 431-amino-acid chain; its full sequence is Enolase (431 aa).

Glutamine 175 is a binding site for (2R)-2-phosphoglycerate. The Proton donor role is filled by glutamate 217. Aspartate 254, glutamate 295, and aspartate 322 together coordinate Mg(2+). Positions 347, 376, 377, and 398 each coordinate (2R)-2-phosphoglycerate. Catalysis depends on lysine 347, which acts as the Proton acceptor.

It belongs to the enolase family. Requires Mg(2+) as cofactor.

The protein localises to the cytoplasm. The protein resides in the secreted. It localises to the cell surface. The enzyme catalyses (2R)-2-phosphoglycerate = phosphoenolpyruvate + H2O. Its pathway is carbohydrate degradation; glycolysis; pyruvate from D-glyceraldehyde 3-phosphate: step 4/5. In terms of biological role, catalyzes the reversible conversion of 2-phosphoglycerate (2-PG) into phosphoenolpyruvate (PEP). It is essential for the degradation of carbohydrates via glycolysis. This Anaplasma marginale (strain St. Maries) protein is Enolase.